We begin with the raw amino-acid sequence, 732 residues long: Acylamino-acid-releasing enzyme (732 aa).

Met-1 is subject to N-acetylmethionine. At Ser-187 the chain carries Phosphoserine. Residues Ser-587, Asp-675, and His-707 each act as charge relay system in the active site.

It belongs to the peptidase S9C family. As to quaternary structure, homotetramer. In terms of tissue distribution, expressed in the liver (at protein level).

It localises to the cytoplasm. It catalyses the reaction Cleavage of an N-acetyl or N-formyl amino acid from the N-terminus of a polypeptide.. Homotetramerization is required for activity. Tetramerization results in the formation of a gated channel which is involved in substrate selection and substrate access to the catalytic sites. Its function is as follows. This enzyme catalyzes the hydrolysis of the N-terminal peptide bond of an N-acetylated peptide to generate an N-acetylated amino acid and a peptide with a free N-terminus. It preferentially cleaves off Ac-Ala, Ac-Met and Ac-Ser. Also, involved in the degradation of oxidized and glycated proteins. The sequence is that of Acylamino-acid-releasing enzyme (APEH) from Sus scrofa (Pig).